Reading from the N-terminus, the 509-residue chain is ATP synthase subunit alpha (509 aa).

169–176 (GDRQTGKT) lines the ATP pocket.

It belongs to the ATPase alpha/beta chains family. As to quaternary structure, F-type ATPases have 2 components, CF(1) - the catalytic core - and CF(0) - the membrane proton channel. CF(1) has five subunits: alpha(3), beta(3), gamma(1), delta(1), epsilon(1). CF(0) has three main subunits: a(1), b(2) and c(9-12). The alpha and beta chains form an alternating ring which encloses part of the gamma chain. CF(1) is attached to CF(0) by a central stalk formed by the gamma and epsilon chains, while a peripheral stalk is formed by the delta and b chains.

The protein localises to the cell inner membrane. The catalysed reaction is ATP + H2O + 4 H(+)(in) = ADP + phosphate + 5 H(+)(out). Functionally, produces ATP from ADP in the presence of a proton gradient across the membrane. The alpha chain is a regulatory subunit. This is ATP synthase subunit alpha from Methylorubrum extorquens (strain CM4 / NCIMB 13688) (Methylobacterium extorquens).